The sequence spans 177 residues: Large ribosomal subunit protein uL6 (177 aa).

It belongs to the universal ribosomal protein uL6 family. In terms of assembly, part of the 50S ribosomal subunit.

This protein binds to the 23S rRNA, and is important in its secondary structure. It is located near the subunit interface in the base of the L7/L12 stalk, and near the tRNA binding site of the peptidyltransferase center. This Brucella abortus (strain S19) protein is Large ribosomal subunit protein uL6.